Reading from the N-terminus, the 405-residue chain is Arginine biosynthesis bifunctional protein ArgJ (405 aa).

Substrate is bound by residues T152, K178, T189, E276, N400, and S405. Residue T189 is the Nucleophile of the active site.

The protein belongs to the ArgJ family. As to quaternary structure, heterotetramer of two alpha and two beta chains.

Its subcellular location is the cytoplasm. It catalyses the reaction N(2)-acetyl-L-ornithine + L-glutamate = N-acetyl-L-glutamate + L-ornithine. It carries out the reaction L-glutamate + acetyl-CoA = N-acetyl-L-glutamate + CoA + H(+). It functions in the pathway amino-acid biosynthesis; L-arginine biosynthesis; L-ornithine and N-acetyl-L-glutamate from L-glutamate and N(2)-acetyl-L-ornithine (cyclic): step 1/1. It participates in amino-acid biosynthesis; L-arginine biosynthesis; N(2)-acetyl-L-ornithine from L-glutamate: step 1/4. Functionally, catalyzes two activities which are involved in the cyclic version of arginine biosynthesis: the synthesis of N-acetylglutamate from glutamate and acetyl-CoA as the acetyl donor, and of ornithine by transacetylation between N(2)-acetylornithine and glutamate. This is Arginine biosynthesis bifunctional protein ArgJ from Chromobacterium violaceum (strain ATCC 12472 / DSM 30191 / JCM 1249 / CCUG 213 / NBRC 12614 / NCIMB 9131 / NCTC 9757 / MK).